A 226-amino-acid polypeptide reads, in one-letter code: tRNA (guanine-N(1)-)-methyltransferase (226 aa).

Residues Gly-110 and 130-135 (IGDFIL) each bind S-adenosyl-L-methionine.

It belongs to the RNA methyltransferase TrmD family. Homodimer.

Its subcellular location is the cytoplasm. The catalysed reaction is guanosine(37) in tRNA + S-adenosyl-L-methionine = N(1)-methylguanosine(37) in tRNA + S-adenosyl-L-homocysteine + H(+). Its function is as follows. Specifically methylates guanosine-37 in various tRNAs. The sequence is that of tRNA (guanine-N(1)-)-methyltransferase from Nitratiruptor sp. (strain SB155-2).